Reading from the N-terminus, the 115-residue chain is Colicin-Ib immunity protein (115 aa).

The next 3 membrane-spanning stretches (helical) occupy residues 7 to 27 (VKYL…FYLG), 38 to 58 (FYAF…MRII), and 87 to 107 (IFEL…LIFI).

It localises to the cell membrane. Its function is as follows. This protein is able to protect a cell, which harbors the plasmid IncI1 ColIb-P9 encoding colicin Ib, against colicin Ib. The protein is Colicin-Ib immunity protein of Escherichia coli.